The primary structure comprises 381 residues: Probable serine/threonine-protein kinase PBL25 (381 aa).

Residue cysteine 3 is the site of S-palmitoyl cysteine attachment. Residues 16 to 41 (GSSMPAPYKQPNSPKRTTGEVVAKNA) form a disordered region. Residue threonine 54 is modified to Phosphothreonine. The Protein kinase domain maps to 65 to 342 (FRQECLIGEG…SDVITALSFL (278 aa)). ATP contacts are provided by residues 71–79 (IGEGGFGRV) and lysine 94. Tyrosine 139 is modified (phosphotyrosine). Catalysis depends on aspartate 192, which acts as the Proton acceptor. Serine 196 and serine 226 each carry phosphoserine. Residue threonine 232 is modified to Phosphothreonine. Position 240 is a phosphotyrosine (tyrosine 240). Residues 347-381 (NSSNTGSNHLQQNRSNKYQDAVQWDSSPRYANSQM) are disordered. Over residues 355–381 (HLQQNRSNKYQDAVQWDSSPRYANSQM) the composition is skewed to polar residues.

Belongs to the protein kinase superfamily. Ser/Thr protein kinase family.

The protein resides in the cell membrane. It carries out the reaction L-seryl-[protein] + ATP = O-phospho-L-seryl-[protein] + ADP + H(+). The enzyme catalyses L-threonyl-[protein] + ATP = O-phospho-L-threonyl-[protein] + ADP + H(+). Its function is as follows. May be involved in plant defense signaling. The polypeptide is Probable serine/threonine-protein kinase PBL25 (Arabidopsis thaliana (Mouse-ear cress)).